The following is a 763-amino-acid chain: Amine oxidase [copper-containing] 3 (763 aa).

Residues 2-6 are Cytoplasmic-facing; sequence TQKTT. Residues 7–27 traverse the membrane as a helical; Signal-anchor for type II membrane protein segment; that stretch reads LVLLALAVITIFALVCVLLAG. At 28-763 the chain is on the extracellular side; it reads RSGDGGRLSQ…AFSHGGFTYK (736 aa). The N-linked (GlcNAc...) asparagine glycan is linked to Asn137. Cys198 and Cys199 are disulfide-bonded. N-linked (GlcNAc...) asparagine glycans are attached at residues Asn232 and Asn294. Asp386 (proton acceptor) is an active-site residue. A disulfide bridge links Cys404 with Cys430. The Schiff-base intermediate with substrate; via topaquinone role is filled by Tyr471. 2',4',5'-topaquinone is present on Tyr471. His520 and His522 together coordinate Cu(2+). 4 residues coordinate Ca(2+): Asp529, Leu530, Asp531, and Glu572. Residues Asn581 and Asn592 are each glycosylated (N-linked (GlcNAc...) asparagine). Ca(2+)-binding residues include Glu641 and Phe663. An N-linked (GlcNAc...) asparagine glycan is attached at Asn666. Glu667, Asp673, and Leu674 together coordinate Ca(2+). His684 serves as a coordination point for Cu(2+). A disulfide bond links Cys734 and Cys741.

This sequence belongs to the copper/topaquinone oxidase family. As to quaternary structure, homodimer; disulfide-linked. Probably forms heterodimers with AOC2. The cofactor is Cu(2+). Requires Ca(2+) as cofactor. L-topaquinone is required as a cofactor. In terms of processing, topaquinone (TPQ) is generated by copper-dependent autoxidation of a specific tyrosyl residue. Post-translationally, N- and O-glycosylated. As to expression, highly expressed in adipocytes, aorta and lung. Expressed at lower levels in heart, kidney, large intestine, liver, small intestine and stomach.

It localises to the cell membrane. It carries out the reaction methylamine + O2 + H2O = formaldehyde + H2O2 + NH4(+). The catalysed reaction is benzylamine + O2 + H2O = benzaldehyde + H2O2 + NH4(+). The enzyme catalyses 2-phenylethylamine + O2 + H2O = 2-phenylacetaldehyde + H2O2 + NH4(+). Its function is as follows. Catalyzes the oxidative deamination of primary amines to the corresponding aldehydes with the concomitant production of hydrogen peroxide and ammonia. Has a preference for the primary monoamines methylamine and benzylamine. Could also act on 2-phenylethylamine but much less efficiently. At endothelial cells surface can also function as a cell adhesion protein that participates in lymphocyte extravasation and recirculation by mediating the binding of lymphocytes to peripheral lymph node vascular endothelial cells in an L-selectin-independent fashion. In Rattus norvegicus (Rat), this protein is Amine oxidase [copper-containing] 3.